We begin with the raw amino-acid sequence, 232 residues long: Ribose-5-phosphate isomerase A (232 aa).

Substrate contacts are provided by residues 31-34 (TGST), 88-91 (DGAD), and 101-104 (KGGG). Catalysis depends on glutamate 110, which acts as the Proton acceptor. Lysine 128 is a binding site for substrate.

The protein belongs to the ribose 5-phosphate isomerase family. Homodimer.

It carries out the reaction aldehydo-D-ribose 5-phosphate = D-ribulose 5-phosphate. Its pathway is carbohydrate degradation; pentose phosphate pathway; D-ribose 5-phosphate from D-ribulose 5-phosphate (non-oxidative stage): step 1/1. Its function is as follows. Catalyzes the reversible conversion of ribose-5-phosphate to ribulose 5-phosphate. The sequence is that of Ribose-5-phosphate isomerase A from Lactobacillus gasseri (strain ATCC 33323 / DSM 20243 / BCRC 14619 / CIP 102991 / JCM 1131 / KCTC 3163 / NCIMB 11718 / NCTC 13722 / AM63).